The following is an 877-amino-acid chain: Hopanoid transporter HpnN (877 aa).

Residues 1–16 are Cytoplasmic-facing; it reads MVTSLIVRLVAWSVRR. The chain crosses the membrane as a helical span at residues 17 to 37; it reads PVWVVVLSLLIAAFSGVYVAR. At 38–279 the chain is on the periplasmic side; sequence HFKINTDISK…FSSVEDGAAL (242 aa). The helical transmembrane segment at 280-295 threads the bilayer; that stretch reads NGVVTLLVVFVILWLA. The Cytoplasmic segment spans residues 296–299; the sequence is LRSK. A helical transmembrane segment spans residues 300 to 323; sequence RMIASVLVTLFVGLVVTAALGLAM. In terms of domain architecture, SSD spans 302–428; it reads IASVLVTLFV…LTLLPALLRL (127 aa). Topologically, residues 324–332 are periplasmic; the sequence is VGSLNMISV. The chain crosses the membrane as a helical span at residues 333–351; sequence AFMVLFVGLGVDFSIQYGV. The Cytoplasmic portion of the chain corresponds to 352-373; that stretch reads KYREERFRDERIDHALIGAAHS. Residues 374-394 form a helical membrane-spanning segment; the sequence is MGMPLALATTAVAASFFSFIP. Over 395-399 the chain is Periplasmic; it reads TAYRG. Residues 400-426 form a helical membrane-spanning segment; sequence VSELGLIAGVGMFVALLTTLTLLPALL. Residues 427–452 are Cytoplasmic-facing; that stretch reads RLFAPPGESKTPGFPWLAPVDDYLDR. A helical membrane pass occupies residues 453-472; the sequence is HRKPILIGTLAVVIGALPLL. The Periplasmic portion of the chain corresponds to 473–718; that stretch reads AFLHFDFNPL…ILHSANTIIS (246 aa). The helical transmembrane segment at 719–739 threads the bilayer; sequence AFLHAALWSIISITILLWITL. The Cytoplasmic portion of the chain corresponds to 740 to 743; the sequence is RRFG. Residues 744–766 traverse the membrane as a helical segment; that stretch reads DVLRTLVPLLVSGIVTLEMCVVL. Residues 767–774 lie on the Periplasmic side of the membrane; sequence GMSLNFAN. A helical membrane pass occupies residues 775–794; that stretch reads IIALPLMLGVGVAFKVYFVM. At 795 to 809 the chain is on the cytoplasmic side; it reads AWRAGQTGLLHSSLT. A helical transmembrane segment spans residues 810–827; it reads HAVLFSAATTATAFGSLW. At 828–836 the chain is on the periplasmic side; the sequence is LSHHPGTSS. A helical transmembrane segment spans residues 837–858; that stretch reads MGKLLALALTCTLIGAVVFQPV. Topologically, residues 859-877 are cytoplasmic; the sequence is LMGKPRVKRAKNQSQGINE.

Belongs to the resistance-nodulation-cell division (RND) (TC 2.A.6) family. MmpL subfamily. Homodimer.

It localises to the cell inner membrane. Essential for hopanoid transport from the cytoplasmic to the outer membrane. Is capable of shuttling hopanoid lipids from the inner membrane to the periplasm, where they probably spontaneously insert to the inner leaflet of the outer membrane, strengthening the cell envelope. May be a proton-motive-force (PMF)-dependent transporter. Is critical for multidrug resistance and cell wall remodeling in Burkholderia. The chain is Hopanoid transporter HpnN from Burkholderia multivorans (strain ATCC 17616 / 249).